Consider the following 134-residue polypeptide: UPF0412 protein YaaI (134 aa).

The first 23 residues, 1–23, serve as a signal peptide directing secretion; it reads MKSVITISASLAISLMLCCTAQA.

Belongs to the UPF0412 family.

This chain is UPF0412 protein YaaI, found in Escherichia coli (strain UTI89 / UPEC).